A 363-amino-acid polypeptide reads, in one-letter code: Putative F-box protein At4g22170 (363 aa).

An F-box domain is found at 7 to 58; it reads PNSWSDLPHDLLNLVFERLSFANFNRARSVCSSWYSASRQSVPKNQIHWLIL.

The polypeptide is Putative F-box protein At4g22170 (Arabidopsis thaliana (Mouse-ear cress)).